The following is a 94-amino-acid chain: FXYD domain-containing ion transport regulator 6 (94 aa).

A signal peptide spans 1 to 17 (METVLILCSLLAPVVLA). Residues 18 to 34 (SAAEKEKEKDPFYYDYQ) lie on the Extracellular side of the membrane. The helical transmembrane segment at 35-57 (TLRIGGLVFAVVLFSVGILLILS) threads the bilayer. Residues 58–94 (RRCKCSFNQKPRAPGDEEAQVENLITTNAAEPQKAEN) lie on the Cytoplasmic side of the membrane.

This sequence belongs to the FXYD family. As to quaternary structure, regulatory subunit of the sodium/potassium-transporting ATPase which is composed of a catalytic alpha subunit, a non-catalytic beta subunit and an additional regulatory subunit. The regulatory subunit, a member of the FXYD protein family, modulates the enzymatic activity in a tissue- and isoform-specific way by changing affinities of the Na+/K+-ATPase toward Na(+), K(+) or ATP. As to expression, expressed in the neuronal fibers of the medial part of lateral habenula nucleus, thalamus, hypothalamus, stria terminalis, zona incerta, amygdaloid body and cingulum, olfactory bulb, hippocampus, cerebral cortex and cerebellum. In the cerebellum there is a predominant expression pattern in the granule layer of lobules VI-IX of the posterior lobe. Detected in inner ear.

The protein localises to the cell membrane. Its function is as follows. Associates with and regulates the activity of the sodium/potassium-transporting ATPase (NKA) which catalyzes the hydrolysis of ATP coupled with the exchange of Na(+) and K(+) ions across the plasma membrane. Decreases the apparent affinity of the transporter for Na(+). In addition to modulating NKA kinetics, may also function as a regulator of NKA localization to the plasma membrane. This is FXYD domain-containing ion transport regulator 6 (Fxyd6) from Rattus norvegicus (Rat).